Here is a 538-residue protein sequence, read N- to C-terminus: Chaperonin GroEL (538 aa).

Residues Thr29–Pro32, Asp86–Thr90, Gly413, Asp479–Leu481, and Asp495 each bind ATP.

This sequence belongs to the chaperonin (HSP60) family. Forms a cylinder of 14 subunits composed of two heptameric rings stacked back-to-back. Interacts with the co-chaperonin GroES.

The protein resides in the cytoplasm. It carries out the reaction ATP + H2O + a folded polypeptide = ADP + phosphate + an unfolded polypeptide.. Its function is as follows. Together with its co-chaperonin GroES, plays an essential role in assisting protein folding. The GroEL-GroES system forms a nano-cage that allows encapsulation of the non-native substrate proteins and provides a physical environment optimized to promote and accelerate protein folding. The sequence is that of Chaperonin GroEL from Fervidobacterium nodosum (strain ATCC 35602 / DSM 5306 / Rt17-B1).